The primary structure comprises 118 residues: Large ribosomal subunit protein bL20 (118 aa).

It belongs to the bacterial ribosomal protein bL20 family.

Its function is as follows. Binds directly to 23S ribosomal RNA and is necessary for the in vitro assembly process of the 50S ribosomal subunit. It is not involved in the protein synthesizing functions of that subunit. The chain is Large ribosomal subunit protein bL20 from Shewanella baltica (strain OS223).